The primary structure comprises 290 residues: ATP synthase gamma chain (290 aa).

This sequence belongs to the ATPase gamma chain family. F-type ATPases have 2 components, CF(1) - the catalytic core - and CF(0) - the membrane proton channel. CF(1) has five subunits: alpha(3), beta(3), gamma(1), delta(1), epsilon(1). CF(0) has three main subunits: a, b and c.

Its subcellular location is the cell inner membrane. Its function is as follows. Produces ATP from ADP in the presence of a proton gradient across the membrane. The gamma chain is believed to be important in regulating ATPase activity and the flow of protons through the CF(0) complex. This chain is ATP synthase gamma chain, found in Delftia acidovorans (strain DSM 14801 / SPH-1).